A 167-amino-acid polypeptide reads, in one-letter code: Centrin-3 (167 aa).

4 EF-hand domains span residues 25-60, 61-96, 98-133, and 134-167; these read EQKQ…LGFD, VKKA…WILE, DPHE…LGEN, and MSDE…TGDI. Asp-38, Asp-40, Asp-42, and Glu-49 together coordinate Ca(2+). At Ser-135 the chain carries Phosphoserine. Residues Asp-147, Asp-149, Asp-151, Glu-153, and Glu-158 each coordinate Ca(2+).

Belongs to the centrin family. Monomer. Component of the TREX-2 complex (transcription and export complex 2), composed of at least ENY2, GANP, PCID2, SEM1, and either centrin CETN2 or CETN3. Interacts with USP49.

The protein resides in the cytoplasm. It localises to the cytoskeleton. Its subcellular location is the microtubule organizing center. The protein localises to the centrosome. It is found in the nucleus. The protein resides in the nucleolus. It localises to the nucleus envelope. Its subcellular location is the nuclear pore complex. The protein localises to the centriole. Functionally, plays a fundamental role in microtubule-organizing center structure and function. Its function is as follows. As a component of the TREX-2 complex, involved in the export of mRNAs to the cytoplasm through the nuclear pores. The sequence is that of Centrin-3 (Cetn3) from Mus musculus (Mouse).